The chain runs to 947 residues: Bifunctional glutamine synthetase adenylyltransferase/adenylyl-removing enzyme (947 aa).

The segment at 1–440 is adenylyl removase; sequence MTPLSSPLSQ…VFNELIGDDE (440 aa). The adenylyl transferase stretch occupies residues 450-947; that stretch reads SEPWREVWQD…ASWRKWLVAV (498 aa).

Belongs to the GlnE family. The cofactor is Mg(2+).

It carries out the reaction [glutamine synthetase]-O(4)-(5'-adenylyl)-L-tyrosine + phosphate = [glutamine synthetase]-L-tyrosine + ADP. The catalysed reaction is [glutamine synthetase]-L-tyrosine + ATP = [glutamine synthetase]-O(4)-(5'-adenylyl)-L-tyrosine + diphosphate. In terms of biological role, involved in the regulation of glutamine synthetase GlnA, a key enzyme in the process to assimilate ammonia. When cellular nitrogen levels are high, the C-terminal adenylyl transferase (AT) inactivates GlnA by covalent transfer of an adenylyl group from ATP to specific tyrosine residue of GlnA, thus reducing its activity. Conversely, when nitrogen levels are low, the N-terminal adenylyl removase (AR) activates GlnA by removing the adenylyl group by phosphorolysis, increasing its activity. The regulatory region of GlnE binds the signal transduction protein PII (GlnB) which indicates the nitrogen status of the cell. The protein is Bifunctional glutamine synthetase adenylyltransferase/adenylyl-removing enzyme of Salmonella heidelberg (strain SL476).